The chain runs to 572 residues: uncharacterized protein (572 aa).

Residues 13 to 45 form a disordered region; that stretch reads ALIAKPKGKTVSGDGADPKKRGRPKKNATEPAV. A coiled-coil region spans residues 177–204; sequence VLTKEMEEKLEALDRDMRTAEETKVSIA.

This is an uncharacterized protein from Dryophytes versicolor (chameleon treefrog).